The sequence spans 377 residues: Nitric oxide reductase FlRd-NAD(+) reductase (377 aa).

Belongs to the FAD-dependent oxidoreductase family. The cofactor is FAD.

It localises to the cytoplasm. It carries out the reaction 2 reduced [nitric oxide reductase rubredoxin domain] + NAD(+) + H(+) = 2 oxidized [nitric oxide reductase rubredoxin domain] + NADH. It participates in nitrogen metabolism; nitric oxide reduction. In terms of biological role, one of at least two accessory proteins for anaerobic nitric oxide (NO) reductase. Reduces the rubredoxin moiety of NO reductase. The chain is Nitric oxide reductase FlRd-NAD(+) reductase from Shigella dysenteriae serotype 1 (strain Sd197).